A 205-amino-acid chain; its full sequence is Adenylate kinase (205 aa).

11-16 (GSGKGT) serves as a coordination point for ATP. The interval 31-60 (STGDIFRHNVKSMTPLGVEAKRYIDNGDFV) is NMP. AMP is bound by residues T32, R37, 58–60 (DFV), 86–89 (GYPR), and Q93. The segment at 127 to 137 (KRAEIEGRADD) is LID. R128 contacts ATP. Residues R134 and R145 each contribute to the AMP site. G173 is a binding site for ATP.

This sequence belongs to the adenylate kinase family. As to quaternary structure, monomer.

Its subcellular location is the cytoplasm. The catalysed reaction is AMP + ATP = 2 ADP. It participates in purine metabolism; AMP biosynthesis via salvage pathway; AMP from ADP: step 1/1. Functionally, catalyzes the reversible transfer of the terminal phosphate group between ATP and AMP. Plays an important role in cellular energy homeostasis and in adenine nucleotide metabolism. The polypeptide is Adenylate kinase (Micrococcus luteus (strain ATCC 4698 / DSM 20030 / JCM 1464 / CCM 169 / CCUG 5858 / IAM 1056 / NBRC 3333 / NCIMB 9278 / NCTC 2665 / VKM Ac-2230) (Micrococcus lysodeikticus)).